A 357-amino-acid polypeptide reads, in one-letter code: Serine/threonine-protein kinase nekl-2 (357 aa).

A Protein kinase domain is found at 4–267 (YEKVRVVGRG…VSQLLSDPLV (264 aa)). Residues 10-18 (VGRGAFGVC) and K35 contribute to the ATP site. The Proton acceptor role is filled by D137. Residues 281–290 (IEPPPTDKRK) show a composition bias toward basic and acidic residues. A disordered region spans residues 281–357 (IEPPPTDKRK…QSRSQVHSKY (77 aa)). Composition is skewed to polar residues over residues 293-327 (ASLSSRLRTYPTQSTLRPYSLSSNAPTTHLTQLTP) and 336-357 (FFSSGRTSNQRTQSRSQVHSKY).

The protein belongs to the protein kinase superfamily. NEK Ser/Thr protein kinase family. NIMA subfamily. Requires Mg(2+) as cofactor. As to expression, expressed in hypodermal cells including in hyp7 syncytium but not in seam cells.

The protein resides in the cytoplasm. It catalyses the reaction L-seryl-[protein] + ATP = O-phospho-L-seryl-[protein] + ADP + H(+). The enzyme catalyses L-threonyl-[protein] + ATP = O-phospho-L-threonyl-[protein] + ADP + H(+). In terms of biological role, probable serine/threonine-protein kinase required for the completion of molting. May play a role in endocytosis in the hypodermis syncytium. In Caenorhabditis elegans, this protein is Serine/threonine-protein kinase nekl-2.